Here is a 735-residue protein sequence, read N- to C-terminus: Muskelin (735 aa).

Alanine 2 bears the N-acetylalanine mark. The region spanning 172–204 (REQEAIRLCLKHFRQHNYTEAFESLQKKTKIAL) is the LisH domain. Positions 206–258 (HPMLTDIHDKLVLKGDFDACEELIEKAVNDGLFNQYISQQEYKPRWSQIIPKS) constitute a CTLH domain. 6 Kelch repeats span residues 284 to 330 (TVYL…SCHK), 339 to 391 (QIYT…FDHQ), 408 to 458 (ILTC…SRIG), 469 to 515 (CLYV…TGFT), 526 to 578 (EIHV…SLQE), and 597 to 651 (VHYL…AQMD).

As to quaternary structure, homodimer; may form higher oligomers. Identified in the CTLH complex that contains GID4, RANBP9 and/or RANBP10, MKLN1, MAEA, RMND5A (or alternatively its paralog RMND5B), GID8, ARMC8, WDR26 and YPEL5. Within this complex, MAEA, RMND5A (or alternatively its paralog RMND5B), GID8, WDR26, and RANBP9 and/or RANBP10 form the catalytic core, while GID4, MKLN1, ARMC8 and YPEL5 have ancillary roles. Interacts with RANBP9. Part of a complex consisting of RANBP9, MKLN1 and GID8. Interacts with GABRA1. Interacts with the C-terminal tail of PTGER3.

The protein resides in the cytoplasm. The protein localises to the cytosol. It localises to the nucleus. Its subcellular location is the nucleoplasm. It is found in the cell projection. The protein resides in the ruffle. The protein localises to the cell cortex. It localises to the synapse. Its subcellular location is the postsynapse. Its function is as follows. Component of the CTLH E3 ubiquitin-protein ligase complex that selectively accepts ubiquitin from UBE2H and mediates ubiquitination and subsequent proteasomal degradation of the transcription factor HBP1. Required for internalization of the GABA receptor GABRA1 from the cell membrane via endosomes and subsequent GABRA1 degradation. Acts as a mediator of cell spreading and cytoskeletal responses to the extracellular matrix component THBS1. This is Muskelin (MKLN1) from Pongo abelii (Sumatran orangutan).